The following is a 104-amino-acid chain: UPF0145 protein VIBHAR_02090 (104 aa).

Belongs to the UPF0145 family.

The sequence is that of UPF0145 protein VIBHAR_02090 from Vibrio campbellii (strain ATCC BAA-1116).